A 310-amino-acid polypeptide reads, in one-letter code: Zinc finger protein unc-98 (310 aa).

Over residues 73 to 84 (GSSSAQTPTKSS) the composition is skewed to polar residues. Residues 73–102 (GSSSAQTPTKSSGGALDGSDQQEVRQDGTS) are disordered. 2 C2H2-type zinc fingers span residues 113 to 135 (YKCR…ERIH) and 141 to 163 (YVCG…AAQH). A C2H2-type 3; degenerate zinc finger spans residues 169–188 (YKCECGRTFFSYTEMLYHKH). Positions 198-310 (APETTTIKVS…RTSGYVTPRF (113 aa)) are interaction with myo-3. The C2H2-type 4 zinc finger occupies 246–268 (YICEYCSKSYSDSRGLAYHMYSH).

In terms of assembly, interacts with hum-6, mep-1, myo-3, unc-96 and unc-97/PINCH. As to expression, expressed in embryos from 1.5- to 2-fold stage in myofibrils. In larvae and adults, it is expressed in body wall muscle, and in addition, anal depressor muscle and vulval muscles. More specifically it is found in the thick filaments of muscle fibers.

The protein resides in the nucleus. It is found in the cytoplasm. Its function is as follows. Probable transcription factor required for muscle structure. Its dual subcellular localization suggests that it may function both as a muscle adhesion complex protein and as a transcription factor, or work together with transcription factors, to influence gene expression. Thought to act as a molecular bridge between unc-97 and myo-3 at the M-line of muscles, possibly in a signaling role. Plays a role in the formation of muscle connections, also called muscle arm extensions, between the body wall and the motor axons in the dorsal and ventral cord. The chain is Zinc finger protein unc-98 (unc-98) from Caenorhabditis elegans.